Consider the following 485-residue polypeptide: Glutamate--tRNA ligase (485 aa).

The 'HIGH' region motif lies at 11–21; sequence PSPTGHLHIGG. A 'KMSKS' region motif is present at residues 252–256; it reads KMSKR. An ATP-binding site is contributed by Lys255.

Belongs to the class-I aminoacyl-tRNA synthetase family. Glutamate--tRNA ligase type 1 subfamily. Monomer.

The protein localises to the cytoplasm. It carries out the reaction tRNA(Glu) + L-glutamate + ATP = L-glutamyl-tRNA(Glu) + AMP + diphosphate. In terms of biological role, catalyzes the attachment of glutamate to tRNA(Glu) in a two-step reaction: glutamate is first activated by ATP to form Glu-AMP and then transferred to the acceptor end of tRNA(Glu). The chain is Glutamate--tRNA ligase from Halalkalibacterium halodurans (strain ATCC BAA-125 / DSM 18197 / FERM 7344 / JCM 9153 / C-125) (Bacillus halodurans).